A 197-amino-acid polypeptide reads, in one-letter code: ATP-dependent Clp protease proteolytic subunit 1 (197 aa).

The active-site Nucleophile is Ser96. The active site involves His121.

This sequence belongs to the peptidase S14 family. In terms of assembly, fourteen ClpP subunits assemble into 2 heptameric rings which stack back to back to give a disk-like structure with a central cavity, resembling the structure of eukaryotic proteasomes.

It is found in the cytoplasm. The catalysed reaction is Hydrolysis of proteins to small peptides in the presence of ATP and magnesium. alpha-casein is the usual test substrate. In the absence of ATP, only oligopeptides shorter than five residues are hydrolyzed (such as succinyl-Leu-Tyr-|-NHMec, and Leu-Tyr-Leu-|-Tyr-Trp, in which cleavage of the -Tyr-|-Leu- and -Tyr-|-Trp bonds also occurs).. Cleaves peptides in various proteins in a process that requires ATP hydrolysis. Has a chymotrypsin-like activity. Plays a major role in the degradation of misfolded proteins. This Synechococcus sp. (strain CC9902) protein is ATP-dependent Clp protease proteolytic subunit 1.